We begin with the raw amino-acid sequence, 99 residues long: NADH-quinone oxidoreductase subunit K (99 aa).

A run of 3 helical transmembrane segments spans residues 3-23 (PMYY…GVLL), 28-48 (IIVF…LVTF), and 62-82 (FFVM…IVAI).

This sequence belongs to the complex I subunit 4L family. NDH-1 is composed of 14 different subunits. Subunits NuoA, H, J, K, L, M, N constitute the membrane sector of the complex.

The protein resides in the cell membrane. The catalysed reaction is a quinone + NADH + 5 H(+)(in) = a quinol + NAD(+) + 4 H(+)(out). NDH-1 shuttles electrons from NADH, via FMN and iron-sulfur (Fe-S) centers, to quinones in the respiratory chain. The immediate electron acceptor for the enzyme in this species is believed to be a menaquinone. Couples the redox reaction to proton translocation (for every two electrons transferred, four hydrogen ions are translocated across the cytoplasmic membrane), and thus conserves the redox energy in a proton gradient. This Acidothermus cellulolyticus (strain ATCC 43068 / DSM 8971 / 11B) protein is NADH-quinone oxidoreductase subunit K.